The chain runs to 233 residues: Pathogenesis-related thaumatin-like protein 3.2 (233 aa).

The first 22 residues, 1–22 (MARAMHTVWIALVPTLFVFLQG), serve as a signal peptide directing secretion. 8 cysteine pairs are disulfide-bonded: cysteine 36–cysteine 232, cysteine 77–cysteine 87, cysteine 92–cysteine 98, cysteine 145–cysteine 221, cysteine 151–cysteine 204, cysteine 159–cysteine 169, cysteine 173–cysteine 182, and cysteine 183–cysteine 191. N-linked (GlcNAc...) asparagine glycosylation occurs at asparagine 195.

The protein belongs to the thaumatin family. In terms of tissue distribution, strongly expressed in roots and in female and male strobili, and, to a lower extent, in cotyledons, leaves, stems and pollen grains.

Its function is as follows. May be involved in disease resistance. The sequence is that of Pathogenesis-related thaumatin-like protein 3.2 from Cryptomeria japonica (Japanese cedar).